The primary structure comprises 461 residues: V-type ATP synthase beta chain 1 (461 aa).

The protein belongs to the ATPase alpha/beta chains family.

Produces ATP from ADP in the presence of a proton gradient across the membrane. The V-type beta chain is a regulatory subunit. The protein is V-type ATP synthase beta chain 1 of Clostridium tetani (strain Massachusetts / E88).